Consider the following 233-residue polypeptide: Small ribosomal subunit protein uS3 (233 aa).

The KH type-2 domain maps to 39 to 107 (VREFLKKRLG…PVHVNIEEVR (69 aa)). Residues 212 to 233 (VQATPAAPEKKMRKGARNAAAN) form a disordered region.

This sequence belongs to the universal ribosomal protein uS3 family. Part of the 30S ribosomal subunit. Forms a tight complex with proteins S10 and S14.

Functionally, binds the lower part of the 30S subunit head. Binds mRNA in the 70S ribosome, positioning it for translation. This is Small ribosomal subunit protein uS3 from Chromobacterium violaceum (strain ATCC 12472 / DSM 30191 / JCM 1249 / CCUG 213 / NBRC 12614 / NCIMB 9131 / NCTC 9757 / MK).